Reading from the N-terminus, the 253-residue chain is MTSIAKSIVLLASLATFAYSLYVVGSLMMFLSTPRSISKAHTWIFNLLDNKSRLQTAYGPVVFDTLYLIGFIFQHSFLKSAVVKKLLAKLGLSGAERTIYSLTSSLCLHYLIVNWLPAQSIVLWQIDVEQSAPLWWTFVITHGICWVVIFGGSLVMDLPELLGVKQAYYDLKAYGPPISYKSGELRNLYAHVRHPSFVGLSVILFATNVMSVDRLVMALLLTTYMYLAWSTDQKDVAYQKIQLQRKKLELKAK.

Residues 1–2 (MT) lie on the Nuclear side of the membrane. A helical membrane pass occupies residues 3-30 (SIAKSIVLLASLATFAYSLYVVGSLMMF). At 31–56 (LSTPRSISKAHTWIFNLLDNKSRLQT) the chain is on the perinuclear space side. The helical transmembrane segment at 57–78 (AYGPVVFDTLYLIGFIFQHSFL) threads the bilayer. At 79–96 (KSAVVKKLLAKLGLSGAE) the chain is on the nuclear side. A helical transmembrane segment spans residues 97–113 (RTIYSLTSSLCLHYLIV). Residues 114–132 (NWLPAQSIVLWQIDVEQSA) lie on the Perinuclear space side of the membrane. The helical transmembrane segment at 133 to 161 (PLWWTFVITHGICWVVIFGGSLVMDLPEL) threads the bilayer. The Nuclear portion of the chain corresponds to 162–188 (LGVKQAYYDLKAYGPPISYKSGELRNL). A helical transmembrane segment spans residues 189-207 (YAHVRHPSFVGLSVILFAT). Topologically, residues 208–213 (NVMSVD) are perinuclear space. The chain crosses the membrane as a helical span at residues 214-231 (RLVMALLLTTYMYLAWST). Topologically, residues 232 to 253 (DQKDVAYQKIQLQRKKLELKAK) are nuclear.

This sequence belongs to the nurim family.

Its subcellular location is the nucleus inner membrane. The sequence is that of Nurim homolog (nrm) from Drosophila melanogaster (Fruit fly).